The sequence spans 428 residues: Histidinol dehydrogenase (428 aa).

Residues Tyr127, Gln185, and Asn208 each coordinate NAD(+). Residues Ser234, Gln256, and His259 each coordinate substrate. Residues Gln256 and His259 each coordinate Zn(2+). Active-site proton acceptor residues include Glu323 and His324. Residues His324, Asp357, Glu411, and His416 each contribute to the substrate site. Residue Asp357 coordinates Zn(2+). His416 lines the Zn(2+) pocket.

The protein belongs to the histidinol dehydrogenase family. The cofactor is Zn(2+).

The enzyme catalyses L-histidinol + 2 NAD(+) + H2O = L-histidine + 2 NADH + 3 H(+). The protein operates within amino-acid biosynthesis; L-histidine biosynthesis; L-histidine from 5-phospho-alpha-D-ribose 1-diphosphate: step 9/9. Its function is as follows. Catalyzes the sequential NAD-dependent oxidations of L-histidinol to L-histidinaldehyde and then to L-histidine. This is Histidinol dehydrogenase from Mannheimia succiniciproducens (strain KCTC 0769BP / MBEL55E).